The sequence spans 268 residues: Glutamate racemase (268 aa).

Substrate-binding positions include 14-15 (DS) and 46-47 (YG). Catalysis depends on Cys-78, which acts as the Proton donor/acceptor. Residue 79–80 (NS) coordinates substrate. Cys-190 functions as the Proton donor/acceptor in the catalytic mechanism. 191–192 (TH) contacts substrate.

The protein belongs to the aspartate/glutamate racemases family.

It carries out the reaction L-glutamate = D-glutamate. The protein operates within cell wall biogenesis; peptidoglycan biosynthesis. In terms of biological role, provides the (R)-glutamate required for cell wall biosynthesis. This Treponema pallidum (strain Nichols) protein is Glutamate racemase.